Reading from the N-terminus, the 422-residue chain is MISQFEIIGDNKIGVLPKQVDQLQMCRDIAASKDLQENDSSFMLVDLDKIIERFQLWKRELPMIEPFYAVKCNTDLVLIRILASLGCGFDCASKDEIDIVMGTGVSAERIIYANPCKTRSFIAHAMDRDVKMMTFDNPEELLKIAKLHPNAEMILRIAVSDPTATCPLNLKFGADPIIAAPQLLKTASEEGINVVGISFHVGSGCNDASAYRNALQHAKNLCEIGEGLGFKMDIIDMGGGFPGAEHHNPFEKIAETIRDALDEFFPDTNKRLIAEPGRFFAAGPFSLVANIIHATEVPASKITKDPKDCADHGYMYYINDGVYGSFNCILFDHAHPIGSPLFDTDRNEKFMSTIWGPTCDSLDLVEDKKLMPKMNVGEWLYYPDMGAYTLAAATTFNGFSKPVPMYVMSEEMWESIRDSTHV.

Residue Lys71 is modified to N6-(pyridoxal phosphate)lysine. Pyridoxal 5'-phosphate contacts are provided by residues Ser203, Gly240, and 275-278 (EPGR). 331–332 (FD) is a substrate binding site. The active-site Proton donor; shared with dimeric partner is the Cys359. Residue Asp360 coordinates substrate. Tyr388 contacts pyridoxal 5'-phosphate.

This sequence belongs to the Orn/Lys/Arg decarboxylase class-II family. In terms of assembly, homodimer. Only the dimer is catalytically active, as the active sites are constructed of residues from both monomers. Requires pyridoxal 5'-phosphate as cofactor.

The enzyme catalyses L-ornithine + H(+) = putrescine + CO2. Its pathway is amine and polyamine biosynthesis; putrescine biosynthesis via L-ornithine pathway; putrescine from L-ornithine: step 1/1. With respect to regulation, inhibited by antizyme (AZ) in response to polyamine levels. AZ inhibits the assembly of the functional homodimer by binding to ODC monomers and targeting them for ubiquitin-independent proteolytic destruction by the 26S proteasome. Catalyzes the first and rate-limiting step of polyamine biosynthesis that converts ornithine into putrescine, which is the precursor for the polyamines, spermidine and spermine. Polyamines are essential for cell proliferation and are implicated in cellular processes, ranging from DNA replication to apoptosis. This is Ornithine decarboxylase from Caenorhabditis elegans.